The sequence spans 301 residues: Probable alpha-L-glutamate ligase (301 aa).

Residues 104 to 287 (LQILARKGIG…VAGKIIEYLE (184 aa)) enclose the ATP-grasp domain. Residues Lys-141, 178–179 (EY), Asp-187, and 211–213 (RSN) each bind ATP. Mg(2+) contacts are provided by Asp-248, Glu-260, and Asn-262. Mn(2+)-binding residues include Asp-248, Glu-260, and Asn-262.

The protein belongs to the RimK family. Requires Mg(2+) as cofactor. Mn(2+) is required as a cofactor.

This Picosynechococcus sp. (strain ATCC 27264 / PCC 7002 / PR-6) (Agmenellum quadruplicatum) protein is Probable alpha-L-glutamate ligase.